The primary structure comprises 92 residues: Small ribosomal subunit protein uS19 (92 aa).

The protein belongs to the universal ribosomal protein uS19 family.

Its function is as follows. Protein S19 forms a complex with S13 that binds strongly to the 16S ribosomal RNA. This Vibrio atlanticus (strain LGP32) (Vibrio splendidus (strain Mel32)) protein is Small ribosomal subunit protein uS19.